The chain runs to 270 residues: Interleukin-1 beta (270 aa).

Positions 1 to 118 (MARVPEPTSE…KCDDNAFVHD (118 aa)) are excised as a propeptide.

Belongs to the IL-1 family. Monomer. In its precursor form, weakly interacts with full-length MEFV; the mature cytokine does not interact at all. Interacts with integrins ITGAV:ITGBV and ITGA5:ITGB1; integrin-binding is required for IL1B signaling. Interacts with cargo receptor TMED10; the interaction is direct and is required for the secretion of IL1B mature form. Interacts with HSP90AB1; the interaction facilitates cargo translocation into the ERGIC. Interacts with HSP90B1; the interaction facilitates cargo translocation into the ERGIC.

It localises to the cytoplasm. The protein resides in the cytosol. It is found in the secreted. Its subcellular location is the lysosome. The protein localises to the extracellular exosome. Potent pro-inflammatory cytokine. Initially discovered as the major endogenous pyrogen, induces prostaglandin synthesis, neutrophil influx and activation, T-cell activation and cytokine production, B-cell activation and antibody production, and fibroblast proliferation and collagen production. Promotes Th17 differentiation of T-cells. Synergizes with IL12/interleukin-12 to induce IFNG synthesis from T-helper 1 (Th1) cells. Plays a role in angiogenesis by inducing VEGF production synergistically with TNF and IL6. Involved in transduction of inflammation downstream of pyroptosis: its mature form is specifically released in the extracellular milieu by passing through the gasdermin-D (GSDMD) pore. The polypeptide is Interleukin-1 beta (IL1B) (Mustela putorius furo (European domestic ferret)).